Here is a 165-residue protein sequence, read N- to C-terminus: Chorismate pyruvate-lyase (165 aa).

Positions 35, 77, 115, and 156 each coordinate substrate.

The protein belongs to the UbiC family. As to quaternary structure, monomer.

The protein resides in the cytoplasm. It carries out the reaction chorismate = 4-hydroxybenzoate + pyruvate. Its pathway is cofactor biosynthesis; ubiquinone biosynthesis. Its function is as follows. Removes the pyruvyl group from chorismate, with concomitant aromatization of the ring, to provide 4-hydroxybenzoate (4HB) for the ubiquinone pathway. The protein is Chorismate pyruvate-lyase of Enterobacter sp. (strain 638).